A 235-amino-acid polypeptide reads, in one-letter code: Isoprenyl transferase (235 aa).

The active site involves Asp21. Residue Asp21 participates in Mg(2+) binding. Residues 22-25, Trp26, Lys34, His38, and 66-68 each bind substrate; these read GNAR and SSE. Asn69 functions as the Proton acceptor in the catalytic mechanism. Substrate-binding positions include Trp70, Arg72, Arg183, and 189-191; that span reads RIS. Residue Glu202 participates in Mg(2+) binding.

It belongs to the UPP synthase family. As to quaternary structure, homodimer. Mg(2+) is required as a cofactor.

Its function is as follows. Catalyzes the condensation of isopentenyl diphosphate (IPP) with allylic pyrophosphates generating different type of terpenoids. The chain is Isoprenyl transferase from Rickettsia felis (strain ATCC VR-1525 / URRWXCal2) (Rickettsia azadi).